A 412-amino-acid chain; its full sequence is 46 kDa FK506-binding nuclear protein (412 aa).

Composition is skewed to acidic residues over residues 95–113 (EEDL…EEEA), 169–178 (GEDIDTDEND), and 188–216 (EGDD…EEEE). The interval 95–304 (EEDLEDEEEA…PVEKKEKKQI (210 aa)) is disordered. The segment covering 247-257 (KSQKRRLKKKL) has biased composition (basic residues). The segment covering 271-303 (DKPKKEEPQQKAEKKKPEAKKEEAPVEKKEKKQ) has biased composition (basic and acidic residues). In terms of domain architecture, PPIase FKBP-type spans 324-412 (GKVVMVYYEG…VFEVDLKNVK (89 aa)).

This sequence belongs to the FKBP-type PPIase family. In terms of processing, phosphorylated by a nuclear kinase in the presence of Mg(2+) and ATP.

Its subcellular location is the nucleus. The enzyme catalyses [protein]-peptidylproline (omega=180) = [protein]-peptidylproline (omega=0). Inhibited by both FK506 and rapamycin. Its function is as follows. PPIases accelerate the folding of proteins. It catalyzes the cis-trans isomerization of proline imidic peptide bonds in oligopeptides. Binds double-stranded DNA in vitro. The chain is 46 kDa FK506-binding nuclear protein (FKBP46) from Spodoptera frugiperda (Fall armyworm).